The following is a 191-amino-acid chain: MAAQIPIVAATSTPAVARNSKKRPASPSHNSSGGGYGASKKKKLSASGFAQGVSIEAMNESKMASSELSSGPVEKAAKPLPFKDPNFVHSGHGGAVAGKKNRTWKNLKQILAAERALPWQLNDPNYFSIDAPPSFKPAKKYSDISGLLANYTDPQSKLRFSTVEEFSYIRRLPSDVVTGYLALRKATSIVP.

The disordered stretch occupies residues 1–41; sequence MAAQIPIVAATSTPAVARNSKKRPASPSHNSSGGGYGASKK.

As to quaternary structure, component of the chromatin remodeling INO80 complex; specifically part of a complex module associated with the helicase ATP-binding and the helicase C-terminal domain of INO80. Component of some MLL1/MLL complex, at least composed of the core components KMT2A/MLL1, ASH2L, HCFC1/HCF1, WDR5 and RBBP5, as well as the facultative components BACC1, CHD8, E2F6, HSP70, INO80C, KANSL1, LAS1L, MAX, MCRS1, MGA, MYST1/MOF, PELP1, PHF20, PRP31, RING2, RUVB1/TIP49A, RUVB2/TIP49B, SENP3, TAF1, TAF4, TAF6, TAF7, TAF9 and TEX10.

It localises to the nucleus. Its function is as follows. Proposed core component of the chromatin remodeling INO80 complex which is involved in transcriptional regulation, DNA replication and probably DNA repair. The sequence is that of INO80 complex subunit C (Ino80c) from Mus musculus (Mouse).